A 276-amino-acid chain; its full sequence is NAD-capped RNA hydrolase NudC (276 aa).

A substrate-binding site is contributed by Arg-82. The Zn(2+) site is built by Cys-112 and Cys-115. A substrate-binding site is contributed by Glu-125. Residues Cys-130 and Cys-133 each coordinate Zn(2+). Tyr-138 contributes to the substrate binding site. In terms of domain architecture, Nudix hydrolase spans 139-262 (PRISPSMIVL…SIARYLIDLY (124 aa)). Positions 172, 188, and 192 each coordinate a divalent metal cation. Residues 173–194 (GFAEPGESAEDCLIREVREEVS) carry the Nudix box motif. Residue 206–213 (QCWPFPHS) participates in substrate binding. Residue Glu-233 coordinates a divalent metal cation. Residue Ala-255 coordinates substrate.

This sequence belongs to the Nudix hydrolase family. NudC subfamily. In terms of assembly, homodimer. Mg(2+) serves as cofactor. Requires Mn(2+) as cofactor. It depends on Zn(2+) as a cofactor.

The enzyme catalyses a 5'-end NAD(+)-phospho-ribonucleoside in mRNA + H2O = a 5'-end phospho-adenosine-phospho-ribonucleoside in mRNA + beta-nicotinamide D-ribonucleotide + 2 H(+). It carries out the reaction NAD(+) + H2O = beta-nicotinamide D-ribonucleotide + AMP + 2 H(+). It catalyses the reaction NADH + H2O = reduced beta-nicotinamide D-ribonucleotide + AMP + 2 H(+). Its function is as follows. mRNA decapping enzyme that specifically removes the nicotinamide adenine dinucleotide (NAD) cap from a subset of mRNAs by hydrolyzing the diphosphate linkage to produce nicotinamide mononucleotide (NMN) and 5' monophosphate mRNA. The NAD-cap is present at the 5'-end of some mRNAs and stabilizes RNA against 5'-processing. Has preference for mRNAs with a 5'-end purine. Catalyzes the hydrolysis of a broad range of dinucleotide pyrophosphates. The polypeptide is NAD-capped RNA hydrolase NudC (Pseudomonas fluorescens (strain ATCC BAA-477 / NRRL B-23932 / Pf-5)).